The chain runs to 291 residues: Porphobilinogen deaminase (291 aa).

Cys-238 carries the post-translational modification S-(dipyrrolylmethanemethyl)cysteine.

It belongs to the HMBS family. As to quaternary structure, monomer. Dipyrromethane serves as cofactor.

It catalyses the reaction 4 porphobilinogen + H2O = hydroxymethylbilane + 4 NH4(+). The protein operates within porphyrin-containing compound metabolism; protoporphyrin-IX biosynthesis; coproporphyrinogen-III from 5-aminolevulinate: step 2/4. In terms of biological role, tetrapolymerization of the monopyrrole PBG into the hydroxymethylbilane pre-uroporphyrinogen in several discrete steps. The sequence is that of Porphobilinogen deaminase from Clostridium beijerinckii (strain ATCC 51743 / NCIMB 8052) (Clostridium acetobutylicum).